The sequence spans 574 residues: Intraflagellar transport protein 56 homolog (574 aa).

TPR repeat units follow at residues 20–52, 57–90, and 151–184; these read AQKMPELDDFLSNQDYEGAISLLNHKLKAGNLD, DSLQLWLAHCYYRLRNYEEAANVYTFLMNKDDAP, and LEDRLSLAGVNYSRMHYQDAIEVYTSVLQTSPNL.

It belongs to the IFT56 family. Component of the IFT complex B composed of at least che-2, che-13, dyf-1, dyf-3, dyf-6, dyf-11, dyf-13, ift-20, ift-74, ift-81, ifta-2, osm-1, osm-5 and osm-6.

It localises to the cell projection. The protein resides in the cilium. Component of the intraflagellar transport (IFT) complex B required for transport of proteins in the motile cilium. May be required for ciliary entrance and transport of specific ciliary cargo proteins such as che-3 which are related to motility. This Caenorhabditis elegans protein is Intraflagellar transport protein 56 homolog.